The following is a 314-amino-acid chain: Altered inheritance of mitochondria protein 6 homolog ARB_06966 (314 aa).

The first 21 residues, 1–21 (MKSSILASAAILAASLEPVAA), serve as a signal peptide directing secretion. 2 N-linked (GlcNAc...) asparagine glycosylation sites follow: asparagine 91 and asparagine 184.

The protein belongs to the AIM6 family.

Its subcellular location is the secreted. This chain is Altered inheritance of mitochondria protein 6 homolog ARB_06966, found in Arthroderma benhamiae (strain ATCC MYA-4681 / CBS 112371) (Trichophyton mentagrophytes).